The following is a 222-amino-acid chain: UPF0488 protein C8orf33 homolog (222 aa).

Low complexity predominate over residues 1-16; it reads MAEPGRPAREAPAASS. 3 disordered regions span residues 1–103, 119–146, and 186–210; these read MAEP…AEQL, KTQR…TPLP, and VSEA…KTTP. Alanine 2 bears the N-acetylalanine mark. A compositionally biased stretch (basic residues) spans 17 to 28; it reads RKTHRAPRRPRP. Position 27 is an omega-N-methylarginine (arginine 27). Residues 29-39 show a composition bias toward low complexity; that stretch reads SRSASGASEPP. Serine 75 is modified (phosphoserine). The segment covering 93-103 has biased composition (low complexity); it reads PPSAEAQAEQL.

Belongs to the UPF0488 family.

The protein is UPF0488 protein C8orf33 homolog of Mus musculus (Mouse).